Reading from the N-terminus, the 482-residue chain is Transcription initiation factor IIE subunit alpha (482 aa).

One can recognise an HTH TFE/IIEalpha-type domain in the interval 9-99 (VKNLLKFVVR…KYPHAIDAIK (91 aa)). Residues 124-152 (CPICLTKYTQLEAVQLLNFDRTEFLCSLC) form a C4-type zinc finger. Residues 274-286 (RELQERQAEEKRK) are compositionally biased toward basic and acidic residues. Disordered regions lie at residues 274 to 295 (RELQERQAEEKRKQNAVPEWHK) and 321 to 482 (AMDS…FEDV). Polar residues predominate over residues 321–345 (AMDSINPDNEPAQETSYQNNRTLTE). The span at 374–401 (EEEEEEEEEEDEEEEEEEEMEDVMDDND) shows a compositional bias: acidic residues. The segment covering 419 to 432 (TAGTAKTESNTSND) has biased composition (polar residues). The segment covering 433–444 (VKQESINDKTED) has biased composition (basic and acidic residues). Residues 464–482 (GDDDDDDDDDEMDIEFEDV) show a composition bias toward acidic residues.

It belongs to the TFIIE alpha subunit family. As to quaternary structure, TFIIE is a tetramer of two alpha (TFA1) and two beta (TFA2) subunits.

The protein localises to the nucleus. Its function is as follows. Recruits TFIIH to the initiation complex and stimulates the RNA polymerase II C-terminal domain kinase and DNA-dependent ATPase activities of TFIIH. Both TFIIH and TFIIE are required for promoter clearance by RNA polymerase. This is Transcription initiation factor IIE subunit alpha (TFA1) from Saccharomyces cerevisiae (strain ATCC 204508 / S288c) (Baker's yeast).